A 955-amino-acid chain; its full sequence is Eukaryotic translation initiation factor 3 subunit C (955 aa).

2 disordered regions span residues 1-22 (MSRFFAGGSDSDSDSSSDSEPV) and 157-299 (RAAP…EEGW). The span at 162–183 (DFAEEEEDDEREDEKGSDEEEE) shows a compositional bias: acidic residues. Positions 206–218 (VKPVADSDSSDWG) are enriched in low complexity. The span at 219 to 229 (SDSDSDSTSSD) shows a compositional bias: acidic residues. The segment covering 230 to 250 (EDAKYTSIRDRFLKKPEKGTE) has biased composition (basic and acidic residues). The segment covering 288 to 297 (MFDENEEEEE) has biased composition (acidic residues). A PCI domain is found at 658–834 (FHMHINLELL…ETIVMHRSEP (177 aa)). The interval 865-955 (NFFQRGGNQG…RNVEYQNKAE (91 aa)) is disordered. Over residues 882 to 894 (YRNQNQNQNWNNN) the composition is skewed to low complexity. The segment covering 911 to 955 (GEGREQREHHRDHHRDQREHREHQNREFREQREQMRNVEYQNKAE) has biased composition (basic and acidic residues).

The protein belongs to the eIF-3 subunit C family. Component of the eukaryotic translation initiation factor 3 (eIF-3) complex.

It is found in the cytoplasm. Functionally, component of the eukaryotic translation initiation factor 3 (eIF-3) complex, which is involved in protein synthesis of a specialized repertoire of mRNAs and, together with other initiation factors, stimulates binding of mRNA and methionyl-tRNAi to the 40S ribosome. The eIF-3 complex specifically targets and initiates translation of a subset of mRNAs involved in cell proliferation. The polypeptide is Eukaryotic translation initiation factor 3 subunit C (Anopheles gambiae (African malaria mosquito)).